The primary structure comprises 397 residues: Multidrug efflux pump subunit AcrA (397 aa).

Residues Met-1–Gly-24 form the signal peptide. Cys-25 is lipidated: N-palmitoyl cysteine. Residue Cys-25 is the site of S-diacylglycerol cysteine attachment. Residues Pro-98 to Ala-172 are a coiled coil. The interval Glu-377–Ser-397 is disordered. The span at Thr-379–Ser-397 shows a compositional bias: polar residues.

It belongs to the membrane fusion protein (MFP) (TC 8.A.1) family. In terms of assembly, monomeric in solution. Homotrimeric; interacts independently with AcrB and TolC as well as AcrZ. Part of the AcrA-AcrB-TolC efflux pump.

The protein localises to the cell inner membrane. Its function is as follows. AcrA-AcrB-AcrZ-TolC is a drug efflux protein complex with broad substrate specificity that uses the proton motive force to export substrates. This subunit may act as an adapter protein that links AcrB and TolC stably together. This is Multidrug efflux pump subunit AcrA (acrA) from Escherichia coli O157:H7.